Consider the following 177-residue polypeptide: Adenine phosphoribosyltransferase (177 aa).

The protein belongs to the purine/pyrimidine phosphoribosyltransferase family. As to quaternary structure, homodimer.

It localises to the cytoplasm. The catalysed reaction is AMP + diphosphate = 5-phospho-alpha-D-ribose 1-diphosphate + adenine. The protein operates within purine metabolism; AMP biosynthesis via salvage pathway; AMP from adenine: step 1/1. In terms of biological role, catalyzes a salvage reaction resulting in the formation of AMP, that is energically less costly than de novo synthesis. The protein is Adenine phosphoribosyltransferase of Idiomarina loihiensis (strain ATCC BAA-735 / DSM 15497 / L2-TR).